Reading from the N-terminus, the 249-residue chain is 2,3-bisphosphoglycerate-dependent phosphoglycerate mutase (249 aa).

Substrate-binding positions include 9–16 (RHGQSQWN), 22–23 (TG), arginine 61, 88–91 (ERHY), lysine 99, 115–116 (RR), and 184–185 (GN). The Tele-phosphohistidine intermediate role is filled by histidine 10. The active-site Proton donor/acceptor is glutamate 88.

This sequence belongs to the phosphoglycerate mutase family. BPG-dependent PGAM subfamily. Homodimer.

It carries out the reaction (2R)-2-phosphoglycerate = (2R)-3-phosphoglycerate. It functions in the pathway carbohydrate degradation; glycolysis; pyruvate from D-glyceraldehyde 3-phosphate: step 3/5. Functionally, catalyzes the interconversion of 2-phosphoglycerate and 3-phosphoglycerate. The polypeptide is 2,3-bisphosphoglycerate-dependent phosphoglycerate mutase (Xylella fastidiosa (strain M12)).